The following is a 138-amino-acid chain: uncharacterized protein (138 aa).

A DNA-binding region (H-T-H motif) is located at residues 17-38; the sequence is LCRNDVAHEAGTNNVQIMRIEK.

This is an uncharacterized protein from Herpetosiphon aurantiacus (Herpetosiphon giganteus).